The chain runs to 203 residues: Urease accessory protein UreG (203 aa).

Residue 11–18 (GPVGSGKT) coordinates GTP.

The protein belongs to the SIMIBI class G3E GTPase family. UreG subfamily. Homodimer. UreD, UreF and UreG form a complex that acts as a GTP-hydrolysis-dependent molecular chaperone, activating the urease apoprotein by helping to assemble the nickel containing metallocenter of UreC. The UreE protein probably delivers the nickel.

The protein resides in the cytoplasm. Its function is as follows. Facilitates the functional incorporation of the urease nickel metallocenter. This process requires GTP hydrolysis, probably effectuated by UreG. In Prochlorococcus marinus (strain AS9601), this protein is Urease accessory protein UreG.